The following is a 152-amino-acid chain: Deoxyuridine 5'-triphosphate nucleotidohydrolase (152 aa).

Residues 71-73 (RSG), asparagine 84, 88-90 (LID), and methionine 98 contribute to the substrate site.

The protein belongs to the dUTPase family. Mg(2+) serves as cofactor.

The enzyme catalyses dUTP + H2O = dUMP + diphosphate + H(+). It functions in the pathway pyrimidine metabolism; dUMP biosynthesis; dUMP from dCTP (dUTP route): step 2/2. Its function is as follows. This enzyme is involved in nucleotide metabolism: it produces dUMP, the immediate precursor of thymidine nucleotides and it decreases the intracellular concentration of dUTP so that uracil cannot be incorporated into DNA. This chain is Deoxyuridine 5'-triphosphate nucleotidohydrolase, found in Shewanella pealeana (strain ATCC 700345 / ANG-SQ1).